We begin with the raw amino-acid sequence, 601 residues long: Membrane protein insertase YidC (601 aa).

The chain crosses the membrane as a helical span at residues 10-30 (ISISLVILVLFQVIASYVLPP). The segment at 34–63 (APPHPATQTAQTQPVSGQPAPGVPAPSAVP) is disordered. The segment covering 39-53 (ATQTAQTQPVSGQPA) has biased composition (low complexity). Residues 54 to 63 (PGVPAPSAVP) show a composition bias toward pro residues. Helical transmembrane passes span 382-404 (FGNMGVAIIVFTIGLKLVLFPLV), 455-475 (LPMLPQIPIFFSLYKVIFISI), 510-530 (ALSPFLHLGILPIIMGITMWG), and 549-569 (FMPVIFTFMLGRFAAGLVLYY).

It belongs to the OXA1/ALB3/YidC family. Type 1 subfamily. As to quaternary structure, interacts with the Sec translocase complex via SecD. Specifically interacts with transmembrane segments of nascent integral membrane proteins during membrane integration.

Its subcellular location is the cell inner membrane. Required for the insertion and/or proper folding and/or complex formation of integral membrane proteins into the membrane. Involved in integration of membrane proteins that insert both dependently and independently of the Sec translocase complex, as well as at least some lipoproteins. Aids folding of multispanning membrane proteins. The chain is Membrane protein insertase YidC from Acidiphilium cryptum (strain JF-5).